A 280-amino-acid chain; its full sequence is UDP-3-O-acyl-N-acetylglucosamine deacetylase (280 aa).

Zn(2+) is bound by residues His79, His237, and Asp241. The Proton donor role is filled by His264.

It belongs to the LpxC family. The cofactor is Zn(2+).

It catalyses the reaction a UDP-3-O-[(3R)-3-hydroxyacyl]-N-acetyl-alpha-D-glucosamine + H2O = a UDP-3-O-[(3R)-3-hydroxyacyl]-alpha-D-glucosamine + acetate. The protein operates within glycolipid biosynthesis; lipid IV(A) biosynthesis; lipid IV(A) from (3R)-3-hydroxytetradecanoyl-[acyl-carrier-protein] and UDP-N-acetyl-alpha-D-glucosamine: step 2/6. Its function is as follows. Catalyzes the hydrolysis of UDP-3-O-myristoyl-N-acetylglucosamine to form UDP-3-O-myristoylglucosamine and acetate, the committed step in lipid A biosynthesis. This chain is UDP-3-O-acyl-N-acetylglucosamine deacetylase, found in Chlamydia caviae (strain ATCC VR-813 / DSM 19441 / 03DC25 / GPIC) (Chlamydophila caviae).